Here is a 363-residue protein sequence, read N- to C-terminus: 3-isopropylmalate dehydrogenase (363 aa).

78–91 lines the NAD(+) pocket; it reads GPKWENLPPESQPE. Residues Arg99, Arg109, Arg138, and Asp227 each contribute to the substrate site. The Mg(2+) site is built by Asp227, Asp251, and Asp255. Position 285 to 297 (285 to 297) interacts with NAD(+); sequence GSAPDIAGKNIAN.

This sequence belongs to the isocitrate and isopropylmalate dehydrogenases family. LeuB type 1 subfamily. Homodimer. It depends on Mg(2+) as a cofactor. The cofactor is Mn(2+).

The protein localises to the cytoplasm. It catalyses the reaction (2R,3S)-3-isopropylmalate + NAD(+) = 4-methyl-2-oxopentanoate + CO2 + NADH. It functions in the pathway amino-acid biosynthesis; L-leucine biosynthesis; L-leucine from 3-methyl-2-oxobutanoate: step 3/4. Its function is as follows. Catalyzes the oxidation of 3-carboxy-2-hydroxy-4-methylpentanoate (3-isopropylmalate) to 3-carboxy-4-methyl-2-oxopentanoate. The product decarboxylates to 4-methyl-2 oxopentanoate. This chain is 3-isopropylmalate dehydrogenase, found in Salmonella typhi.